The sequence spans 75 residues: UPF0235 protein MSMEG_3845 (75 aa).

The protein belongs to the UPF0235 family.

The chain is UPF0235 protein MSMEG_3845 from Mycolicibacterium smegmatis (strain ATCC 700084 / mc(2)155) (Mycobacterium smegmatis).